A 255-amino-acid chain; its full sequence is RNA polymerase sigma-F factor (255 aa).

A Polymerase core binding motif is present at residues 61-74 (DLFQIGCIGLLKSV). A DNA-binding region (H-T-H motif) is located at residues 221–240 (QSEVAERLGISQVQVSRLEK).

The protein belongs to the sigma-70 factor family. As to quaternary structure, interacts transiently with the RNAP core.

Its activity is regulated as follows. Interaction with SpoIIAB inhibits sigma-F activity throughout the cell before the formation of the asymmetric septum; after septation the interaction is confined to the mother cell, and sigma-F activity is released in the prespore. Fin, a second, forespore-specific anti-sigma factor is induced in 2 successive waves by sigma-F and sigma-G, by antagonizing sigma-F it allows the switch to sigma-G factor and progression to the late sporulation development stages. Its function is as follows. Sigma factors are initiation factors that promote the attachment of RNA polymerase to specific initiation sites and are then released. This sigma factor is responsible for the expression of sporulation specific genes. Interaction with SpoIIAB inhibits sigma-F activity throughout the cell before the formation of the asymmetric septum; after septation the interaction is confined to the mother cell, and sigma F activity is released in the prespore. Responsible for expression of csfB (the anti-sigma-G factor Gin). Associates with the RNAP core only in stationary phase cells. This is RNA polymerase sigma-F factor (sigF) from Bacillus subtilis (strain 168).